A 733-amino-acid polypeptide reads, in one-letter code: Photosystem I P700 chlorophyll a apoprotein A2 (733 aa).

8 helical membrane-spanning segments follow: residues 46-69 (IFAS…FHVA), 135-158 (LYQG…LHLQ), 175-199 (LNHH…HVAI), 273-291 (IAHH…GHMY), 330-353 (LHFQ…QHMY), 369-395 (AALY…IFFV), 417-439 (ALIS…LYVH), and 516-534 (FLVH…LILV). [4Fe-4S] cluster contacts are provided by cysteine 558 and cysteine 567. 2 helical membrane-spanning segments follow: residues 574–595 (AFYL…YWHW) and 642–664 (LSVW…MFLI). Residues histidine 653, methionine 661, and tyrosine 669 each contribute to the chlorophyll a site. Tryptophan 670 contributes to the phylloquinone binding site. Residues 706-726 (LVGLAHFTVGYVLTYAAFLIA) form a helical membrane-spanning segment.

Belongs to the PsaA/PsaB family. The PsaA/B heterodimer binds the P700 chlorophyll special pair and subsequent electron acceptors. PSI consists of a core antenna complex that captures photons, and an electron transfer chain that converts photonic excitation into a charge separation. The cyanobacterial PSI reaction center is composed of one copy each of PsaA,B,C,D,E,F,I,J,K,L,M and X, and forms trimeric complexes. Requires PSI electron transfer chain: 5 chlorophyll a, 1 chlorophyll a', 2 phylloquinones and 3 4Fe-4S clusters. PSI core antenna: 90 chlorophyll a, 22 carotenoids, 3 phospholipids and 1 galactolipid. P700 is a chlorophyll a/chlorophyll a' dimer, A0 is one or more chlorophyll a, A1 is one or both phylloquinones and FX is a shared 4Fe-4S iron-sulfur center. as cofactor.

The protein resides in the cellular thylakoid membrane. It carries out the reaction reduced [plastocyanin] + hnu + oxidized [2Fe-2S]-[ferredoxin] = oxidized [plastocyanin] + reduced [2Fe-2S]-[ferredoxin]. PsaA and PsaB bind P700, the primary electron donor of photosystem I (PSI), as well as the electron acceptors A0, A1 and FX. PSI is a plastocyanin/cytochrome c6-ferredoxin oxidoreductase, converting photonic excitation into a charge separation, which transfers an electron from the donor P700 chlorophyll pair to the spectroscopically characterized acceptors A0, A1, FX, FA and FB in turn. Oxidized P700 is reduced on the lumenal side of the thylakoid membrane by plastocyanin or cytochrome c6. The chain is Photosystem I P700 chlorophyll a apoprotein A2 from Picosynechococcus sp. (strain ATCC 27264 / PCC 7002 / PR-6) (Agmenellum quadruplicatum).